Reading from the N-terminus, the 1158-residue chain is ATP-dependent helicase/deoxyribonuclease subunit B (1158 aa).

Residues 1–275 (MTLHAYLGRA…QYFNQLYRFN (275 aa)) form the UvrD-like helicase ATP-binding domain. Residue 8 to 15 (GRAGTGKS) participates in ATP binding. One can recognise a UvrD-like helicase C-terminal domain in the interval 269-583 (NQLYRFNNQD…SIGTMDLAKV (315 aa)). [4Fe-4S] cluster contacts are provided by Cys784, Cys1112, Cys1115, and Cys1121.

This sequence belongs to the helicase family. AddB/RexB type 1 subfamily. Heterodimer of AddA and AddB. It depends on Mg(2+) as a cofactor. Requires [4Fe-4S] cluster as cofactor.

Its function is as follows. The heterodimer acts as both an ATP-dependent DNA helicase and an ATP-dependent, dual-direction single-stranded exonuclease. Recognizes the chi site generating a DNA molecule suitable for the initiation of homologous recombination. The AddB subunit has 5' -&gt; 3' nuclease activity but not helicase activity. The chain is ATP-dependent helicase/deoxyribonuclease subunit B from Staphylococcus aureus (strain MSSA476).